Consider the following 263-residue polypeptide: L-aspartate dehydrogenase (263 aa).

Residues alanine 120 and asparagine 186 each contribute to the NAD(+) site. The active site involves histidine 216.

This sequence belongs to the L-aspartate dehydrogenase family.

The catalysed reaction is L-aspartate + NADP(+) + H2O = oxaloacetate + NH4(+) + NADPH + H(+). The enzyme catalyses L-aspartate + NAD(+) + H2O = oxaloacetate + NH4(+) + NADH + H(+). It participates in cofactor biosynthesis; NAD(+) biosynthesis; iminoaspartate from L-aspartate (dehydrogenase route): step 1/1. Functionally, specifically catalyzes the NAD or NADP-dependent dehydrogenation of L-aspartate to iminoaspartate. The polypeptide is L-aspartate dehydrogenase (Acinetobacter baylyi (strain ATCC 33305 / BD413 / ADP1)).